The primary structure comprises 424 residues: MAQSLAVQGGSAVRTRPWPVWPRPAAGAAEAVQQVLSSGRWSISGPYRGAASQERRFARAFAEYNGVAHCVPAASGTASLMLALEACGVGAGDEVIVPGLSWVASGSTVLGVNAVPVFCDVDPRTLCLDPEAVEAAVTERTKAIVVVHLYSAVADMDALTALAERHSLPLIEDCAQAHGAAYRGVKVGALATAGTFSMQHSKMLTSGEGGAVITRDADFARRVEHLRADGRVLAGQRPGPGEMELVETGELMGNNRCLSEFQAALLTEQLKDLDAQHAIRRRNAALLDGLLRESGYVPQETSEGTSTRTHYTYAVRLPEGRLTHVGLATVARALSAELGCTVAPSYAPITRNRLYDPASRRRFALGVEHQALTDPKRFELPVAEDAARRVLTLHHAALLGAEDDMRDIAAAFGKVLRHGADLTA.

At Lys202 the chain carries N6-(pyridoxal phosphate)lysine.

It belongs to the DegT/DnrJ/EryC1 family. L-glutamine:2-deoxy-scyllo-inosose/scyllo-inosose aminotransferase subfamily. Requires pyridoxal 5'-phosphate as cofactor.

The enzyme catalyses 2-deoxy-L-scyllo-inosose + L-glutamine = 2-deoxy-scyllo-inosamine + 2-oxoglutaramate. It carries out the reaction 3-amino-2,3-dideoxy-scyllo-inosose + L-glutamine = 2-deoxystreptamine + 2-oxoglutaramate. Its pathway is metabolic intermediate biosynthesis; 2-deoxystreptamine biosynthesis; 2-deoxystreptamine from D-glucose 6-phosphate: step 2/4. It functions in the pathway antibiotic biosynthesis; lividomycin biosynthesis. Its function is as follows. Catalyzes the PLP-dependent transamination of 2-deoxy-scyllo-inosose (2-DOI) to form 2-deoxy-scyllo-inosamine (2-DOIA) using L-glutamine as the amino donor. Also catalyzes the transamination of 3-amino-2,3-dideoxy-scyllo-inosose (keto-2-DOIA) into 2-deoxystreptamine (2-DOS). The polypeptide is L-glutamine:2-deoxy-scyllo-inosose aminotransferase (livS) (Streptomyces lividus).